A 641-amino-acid polypeptide reads, in one-letter code: MEKSPEHCAEGSPSPATESAPSATEPPLPSTEPPLPSTEPPLPSTEPPLPPLPPDFEKYWKSVQAYPEDFNTWTYLLQYVEQENHLFAARKAFDAFLAHYPYCYGYWKKYADLEKKNNNILEADEVYRRGIQAITLSVDLWMHYLNFLKETLDPADPETSLTLRGTFEHAVVSAGLDFRSDKLWEMYINWETEQGNLSGVTSIYSRLLGIPTQFYSLHFQRFKEHIQGHLPREFLTSEKFIELRKELASMTLHGGTNDDIPSGLEEIKDPAKRTTEVENMRHRIIEVHQEIFNLNEHEVSKIWNFEEEIKRPYFHVKPLEKAQLNNWKEYLEFELENGSNERIVILFERCVIACACYEEFWIKYAKYMENHSVEGVRHVYNRACHVHLAKKPMVHLLWAAFEEQQGNLEEARRILKNIETAIEGLAMVRLRRVNLERRHGNVKEAEHLLEEAMNKTKTSSESSFYAIKLARHLFKVQANVVKARKVLSNAIQKDKENTKLYLNLLEMEYNCDIKQNEENILAAFDKAIKSPMSIAMRVKFSQRKVEFLEDFGSDVNKLLDTYNEHQKLLKHQDIVKRKAENGLEQPEAKRLHAEEVSTAASVPVTTASMDATQSGYNYGSWYQYNYPANWNFGQYYNTPST.

Residues 1 to 50 form a disordered region; that stretch reads MEKSPEHCAEGSPSPATESAPSATEPPLPSTEPPLPSTEPPLPSTEPPLP. Residues 10–23 show a composition bias toward low complexity; sequence EGSPSPATESAPSA. The segment covering 24–50 has biased composition (pro residues); sequence TEPPLPSTEPPLPSTEPPLPSTEPPLP. HAT repeat units lie at residues 50-82, 84-116, 118-150, 158-193, 304-336, 338-370, and 372-407; these read PPLP…YVEQ, NHLF…LEKK, NNIL…FLKE, ETSL…WETE, NFEE…FELE, GSNE…YMEN, and SVEG…QQGN.

The protein belongs to the PRP39 family.

The protein resides in the nucleus. Involved in pre-mRNA splicing. This chain is Pre-mRNA-processing factor 39 (prpf39), found in Xenopus laevis (African clawed frog).